The chain runs to 391 residues: MALSTSRAINHIMKPLSAAVCATRRLSSDSTATITVETSLPFTSHNIDPPSRSVETSPKELMTFFKDMTEMRRMEIAADSLYKAKLIRGFCHLYDGQEAVAVGMEAAITKKDCIITAYRDHCIFLGRGGTLVEAFAELMGRRDGCSRGKGGSMHFYKKESGFYGGHGIVGAQVPLGIGLAFAQKYKKEDYVTFAMYGDGAANQGQLFEALNMAALWDLPAILVCENNHYGMGTAEWRAAKSPAYYKRGDYVPGLRVDGMDVFAVKQACTFAKQHALKNGPIILEMDTYRYHGHSMSDPGSTYRTRDEISGVRQERDPVERIRSLILAHNIATEAELKDIEKENRKVVDEAIAKAKESPMPDPSELFTNVYVKGFGVEAYGADRKELRATLP.

A mitochondrion-targeting transit peptide spans 1–26; the sequence is MALSTSRAINHIMKPLSAAVCATRRL. Positions 92, 118, 119, 167, 169, 198, 199, 200, 227, and 229 each coordinate pyruvate. Thiamine diphosphate-binding residues include Tyr-118, Arg-119, Gly-167, Val-169, Asp-198, Gly-199, Ala-200, and Asn-227. Asp-198 serves as a coordination point for Mg(2+). Mg(2+) contacts are provided by Asn-227 and Tyr-229. His-293 is a binding site for thiamine diphosphate. Residues 294–313 form a disordered region; the sequence is SMSDPGSTYRTRDEISGVRQ. Positions 303–313 are enriched in basic and acidic residues; sequence RTRDEISGVRQ.

In terms of assembly, tetramer of 2 alpha and 2 beta subunits. Thiamine diphosphate serves as cofactor. It depends on Mg(2+) as a cofactor.

The protein resides in the mitochondrion matrix. The catalysed reaction is N(6)-[(R)-lipoyl]-L-lysyl-[protein] + pyruvate + H(+) = N(6)-[(R)-S(8)-acetyldihydrolipoyl]-L-lysyl-[protein] + CO2. Its activity is regulated as follows. E1 activity is regulated by phosphorylation (inactivation) and dephosphorylation (activation) of the alpha subunit. Its function is as follows. The pyruvate dehydrogenase complex catalyzes the overall conversion of pyruvate to acetyl-CoA and CO(2). It contains multiple copies of three enzymatic components: pyruvate dehydrogenase (E1), dihydrolipoamide acetyltransferase (E2) and lipoamide dehydrogenase (E3). The polypeptide is Pyruvate dehydrogenase E1 component subunit alpha, mitochondrial (Solanum tuberosum (Potato)).